The chain runs to 166 residues: Phosphopantetheine adenylyltransferase (166 aa).

S9 contacts substrate. Residues 9–10 (SF) and H17 contribute to the ATP site. K41, L74, and K88 together coordinate substrate. Residues 89 to 91 (GLR), E99, and 123 to 129 (YIHLSST) each bind ATP.

The protein belongs to the bacterial CoaD family. In terms of assembly, homohexamer. The cofactor is Mg(2+).

Its subcellular location is the cytoplasm. The catalysed reaction is (R)-4'-phosphopantetheine + ATP + H(+) = 3'-dephospho-CoA + diphosphate. It participates in cofactor biosynthesis; coenzyme A biosynthesis; CoA from (R)-pantothenate: step 4/5. Reversibly transfers an adenylyl group from ATP to 4'-phosphopantetheine, yielding dephospho-CoA (dPCoA) and pyrophosphate. This chain is Phosphopantetheine adenylyltransferase, found in Pseudarthrobacter chlorophenolicus (strain ATCC 700700 / DSM 12829 / CIP 107037 / JCM 12360 / KCTC 9906 / NCIMB 13794 / A6) (Arthrobacter chlorophenolicus).